A 1202-amino-acid polypeptide reads, in one-letter code: MNTKDTTEVAENSHHLKIFLPKKLLECLPRCPLLPPERLRWNTNEEIASYLITFEKHDEWLSCAPKTRPQNGSIILYNRKKVKYRKDGYLWKKRKDGKTTREDHMKLKVQGMECLYGCYVHSSIVPTFHRRCYWLLQNPDIVLVHYLNVPALEDCGKGCSPIFCSISSDRREWLKWSREELLGQLKPMFHGIKWSCGNGTEEFSVEHLVQQILDTHPTKPAPRTHACLCSGGLGSGSLTHKCSSTKHRIISPKVEPRALTLTSIPHAHPPEPPPLIAPLPPELPKAHTSPSSSSSSSSSGFAEPLEIRPSPPTSRGGSSRGGTAILLLTGLEQRAGGLTPTRHLAPQADPRPSMSLAVVVGTEPSAPPAPPSPAFDPDRFLNSPQRGQTYGGGQGVSPDFPEAEAAHTPCSALEPAAALEPQAAARGPPPQSVAGGRRGNCFFIQDDDSGEELKGHGAAPPIPSPPPSPPPSPAPLEPSSRVGRGEALFGGPVGASELEPFSLSSFPDLMGELISDEAPSIPAPTPQLSPALSTITDFSPEWSYPEGGVKVLITGPWTEAAEHYSCVFDHIAVPASLVQPGVLRCYCPAHEVGLVSLQVAGREGPLSASVLFEYRARRFLSLPSTQLDWLSLDDNQFRMSILERLEQMEKRMAEIAAAGQVPCQGPDAPPVQDEGQGPGFEARVVVLVESMIPRSTWKGPERLAHGSPFRGMSLLHLAAAQGYARLIETLSQWRSVETGSLDLEQEVDPLNVDHFSCTPLMWACALGHLEAAVLLFRWNRQALSIPDSLGRLPLSVAHSRGHVRLARCLEELQRQEPSVEPPFALSPPSSSPDTGLSSVSSPSELSDGTFSVTSAYSSAPDGSPPPAPLPASEMTMEDMAPGQLSSGVPEAPLLLMDYEATNSKGPLSSLPALPPASDDGAAPEDADSPQAVDVIPVDMISLAKQIIEATPERIKREDFVGLPEAGASMRERTGAVGLSETMSWLASYLENVDHFPSSTPPSELPFERGRLAVPSAPSWAEFLSASTSGKMESDFALLTLSDHEQRELYEAARVIQTAFRKYKGRRLKEQQEVAAAVIQRCYRKYKQLTWIALKFALYKKMTQAAILIQSKFRSYYEQKRFQQSRRAAVLIQQHYRSYRRRPGPPHRTSATLPARNKGSFLTKKQDQAARKIMRFLRRCRHRMRELKQNQELEGLPQPGLAT.

Residues 30-155 (RCPLLPPERL…YLNVPALEDC (126 aa)) constitute a DNA-binding region (CG-1). A Nuclear localization signal motif is present at residues 79-86 (RKKVKYRK). 3 disordered regions span residues 263-322 (SIPH…SRGG), 361-409 (GTEP…AHTP), and 421-491 (PQAA…LFGG). A compositionally biased stretch (pro residues) spans 270–283 (PEPPPLIAPLPPEL). Low complexity-rich tracts occupy residues 289 to 299 (SPSSSSSSSSS) and 313 to 322 (TSRGGSSRGG). Composition is skewed to pro residues over residues 365–374 (SAPPAPPSPA) and 460–476 (PPIP…PAPL). Residues 537–615 (DFSPEWSYPE…LSASVLFEYR (79 aa)) enclose the IPT/TIG domain. ANK repeat units follow at residues 712–745 (MSLL…DLEQ), 757–787 (CTPL…SIPD), and 791–821 (RLPL…SVEP). 2 disordered regions span residues 817–874 (PSVE…ASEM) and 906–929 (PLSS…ADSP). Composition is skewed to low complexity over residues 826–846 (SPPS…SELS) and 906–917 (PLSSLPALPPAS). IQ domains lie at 1049–1078 (YEAA…AAVI) and 1102–1131 (TQAA…AVLI).

This sequence belongs to the CAMTA family. May interact with calmodulin. In terms of tissue distribution, detected in brain. Expressed at constant levels throughout the cell cycle in neuroblastoma cell lines.

The protein localises to the nucleus. In terms of biological role, transcription activator. May act as tumor suppressor. This is Calmodulin-binding transcription activator 2 (CAMTA2) from Homo sapiens (Human).